The following is a 337-amino-acid chain: Ketol-acid reductoisomerase (NADP(+)) (337 aa).

A KARI N-terminal Rossmann domain is found at 1–181 (MKIYYEHDAD…GAARAGVIAT (181 aa)). NADP(+)-binding positions include 24 to 27 (FGSQ), R47, S50, S52, and 82 to 85 (DEKQ). Residue H107 is part of the active site. Residue G133 coordinates NADP(+). Residues 182–328 (TFKDETETDL…SRLRAMMPFL (147 aa)) form the KARI C-terminal knotted domain. Mg(2+)-binding residues include D190, E194, E226, and E230. Residue S251 coordinates substrate.

Belongs to the ketol-acid reductoisomerase family. Requires Mg(2+) as cofactor.

The catalysed reaction is (2R)-2,3-dihydroxy-3-methylbutanoate + NADP(+) = (2S)-2-acetolactate + NADPH + H(+). It catalyses the reaction (2R,3R)-2,3-dihydroxy-3-methylpentanoate + NADP(+) = (S)-2-ethyl-2-hydroxy-3-oxobutanoate + NADPH + H(+). Its pathway is amino-acid biosynthesis; L-isoleucine biosynthesis; L-isoleucine from 2-oxobutanoate: step 2/4. It functions in the pathway amino-acid biosynthesis; L-valine biosynthesis; L-valine from pyruvate: step 2/4. Involved in the biosynthesis of branched-chain amino acids (BCAA). Catalyzes an alkyl-migration followed by a ketol-acid reduction of (S)-2-acetolactate (S2AL) to yield (R)-2,3-dihydroxy-isovalerate. In the isomerase reaction, S2AL is rearranged via a Mg-dependent methyl migration to produce 3-hydroxy-3-methyl-2-ketobutyrate (HMKB). In the reductase reaction, this 2-ketoacid undergoes a metal-dependent reduction by NADPH to yield (R)-2,3-dihydroxy-isovalerate. This Thermus thermophilus (strain ATCC BAA-163 / DSM 7039 / HB27) protein is Ketol-acid reductoisomerase (NADP(+)).